Consider the following 386-residue polypeptide: Probable zinc transporter zrg17 (386 aa).

Transmembrane regions (helical) follow at residues 102-122 (ILFFLVAVGVLLSGDATILLT), 128-148 (IVEGVLIIINVWRETLDSFLV), 163-183 (MELLVDFSFSILLIFLGMNLL), 208-228 (VHIHLTISLFASAIISGFALL), 243-263 (FFHGLTLVPSLILVLLLSLGY), and 268-288 (FLSHLLSLTIAVTALVNGFSI).

This sequence belongs to the cation diffusion facilitator (CDF) transporter (TC 2.A.4) family. SLC30A subfamily. Interacts with cis4.

Its subcellular location is the cytoplasm. It localises to the nucleus membrane. Probable transporter involved in the regulation of zinc homeostasis. The polypeptide is Probable zinc transporter zrg17 (zrg17) (Schizosaccharomyces pombe (strain 972 / ATCC 24843) (Fission yeast)).